A 396-amino-acid polypeptide reads, in one-letter code: Dual specificity mitogen-activated protein kinase kinase dSOR1 (396 aa).

Residues alanine 25–lysine 44 form a disordered region. The Protein kinase domain occupies leucine 87 to isoleucine 364. Residues leucine 93–valine 101 and lysine 116 each bind ATP. Residue aspartate 209 is the Proton acceptor of the active site. A phosphoserine; by RAF mark is found at serine 237 and serine 241.

Belongs to the protein kinase superfamily. STE Ser/Thr protein kinase family. MAP kinase kinase subfamily. In terms of assembly, interacts with Raf and ksr; Dsor1 binding to ksr probably promotes ksr and Raf dimerization and ksr-mediated Raf transactivation. Phosphorylation on Ser/Thr by MAP kinase kinase kinases regulates positively the kinase activity.

It carries out the reaction L-seryl-[protein] + ATP = O-phospho-L-seryl-[protein] + ADP + H(+). The enzyme catalyses L-threonyl-[protein] + ATP = O-phospho-L-threonyl-[protein] + ADP + H(+). The catalysed reaction is L-tyrosyl-[protein] + ATP = O-phospho-L-tyrosyl-[protein] + ADP + H(+). In terms of biological role, required downstream of Raf in the sevenless (sev), torso (tor), and Drosophila EGF receptor homolog (DER) signal transduction pathways. Involved in both positive regulation (at the posterior terminus) and negative regulation (at the anterior domain) of tll, as in other terminal class gene products, maybe via the ERK-A kinase. This is Dual specificity mitogen-activated protein kinase kinase dSOR1 (Dsor1) from Drosophila melanogaster (Fruit fly).